The sequence spans 601 residues: Glutathione-regulated potassium-efflux system protein KefB (601 aa).

A run of 13 helical transmembrane segments spans residues 4 to 24 (ADLL…VPLA), 29 to 49 (IGAV…GLGF), 55 to 75 (EILH…GLEL), 87 to 107 (IFGV…GLLM), 111 to 131 (FLWQ…TAMA), 152 to 172 (VLLF…LLAG), 177 to 197 (HFDW…LIGG), 207 to 227 (FIAA…LVLS), 230 to 250 (LFMD…GVLL), 262 to 282 (AIDP…GMSL), 284 to 304 (LGVL…LVVI), 324 to 344 (MQFA…FSTA), and 356 to 376 (ALLL…MKGI). The 120-residue stretch at 400-519 (KPQVIVVGFG…AGVTQFSRET (120 aa)) folds into the RCK N-terminal domain.

It belongs to the monovalent cation:proton antiporter 2 (CPA2) transporter (TC 2.A.37) family. KefB subfamily. Interacts with the regulatory subunit KefG.

It is found in the cell inner membrane. Functionally, pore-forming subunit of a potassium efflux system that confers protection against electrophiles. Catalyzes K(+)/H(+) antiport. The chain is Glutathione-regulated potassium-efflux system protein KefB from Salmonella paratyphi A (strain ATCC 9150 / SARB42).